We begin with the raw amino-acid sequence, 286 residues long: Phosphate import ATP-binding protein PstB (286 aa).

The interval 1–27 (MEPKETLRQRWPGRGRTEETGAMKKSD) is disordered. Positions 15 to 27 (GRTEETGAMKKSD) are enriched in basic and acidic residues. An ABC transporter domain is found at 33 to 281 (MTVEHLNMYY…PDRKETEDYV (249 aa)). An ATP-binding site is contributed by 65–72 (GPSGCGKS).

The protein belongs to the ABC transporter superfamily. Phosphate importer (TC 3.A.1.7) family. As to quaternary structure, the complex is composed of two ATP-binding proteins (PstB), two transmembrane proteins (PstC and PstA) and a solute-binding protein (PstS).

Its subcellular location is the cell membrane. The catalysed reaction is phosphate(out) + ATP + H2O = ADP + 2 phosphate(in) + H(+). Functionally, part of the ABC transporter complex PstSACB involved in phosphate import. Responsible for energy coupling to the transport system. This Rubrobacter xylanophilus (strain DSM 9941 / JCM 11954 / NBRC 16129 / PRD-1) protein is Phosphate import ATP-binding protein PstB.